We begin with the raw amino-acid sequence, 236 residues long: ATP synthase subunit a (236 aa).

Helical transmembrane passes span 17-37 (LSDMLMITITCLIVFIIAVAA), 75-95 (FLTLGVTLIMYVFVANMLGLP), 112-132 (DATVTLTLAVMVVALTHYYGV), 174-194 (IYAGEILLGLLASLGTHYGVL), and 208-228 (FSIFVGTIQAFIFTMLTMVYM).

Belongs to the ATPase A chain family. As to quaternary structure, F-type ATPases have 2 components, CF(1) - the catalytic core - and CF(0) - the membrane proton channel. CF(1) has five subunits: alpha(3), beta(3), gamma(1), delta(1), epsilon(1). CF(0) has three main subunits: a(1), b(2) and c(9-12). The alpha and beta chains form an alternating ring which encloses part of the gamma chain. CF(1) is attached to CF(0) by a central stalk formed by the gamma and epsilon chains, while a peripheral stalk is formed by the delta and b chains.

It localises to the cell membrane. Key component of the proton channel; it plays a direct role in the translocation of protons across the membrane. This Geobacillus stearothermophilus (Bacillus stearothermophilus) protein is ATP synthase subunit a.